The following is a 149-amino-acid chain: Deoxyuridine 5'-triphosphate nucleotidohydrolase (149 aa).

Substrate-binding positions include 68-70, N81, 85-87, and M95; these read RSG and LID.

Belongs to the dUTPase family. Mg(2+) serves as cofactor.

It carries out the reaction dUTP + H2O = dUMP + diphosphate + H(+). The protein operates within pyrimidine metabolism; dUMP biosynthesis; dUMP from dCTP (dUTP route): step 2/2. In terms of biological role, this enzyme is involved in nucleotide metabolism: it produces dUMP, the immediate precursor of thymidine nucleotides and it decreases the intracellular concentration of dUTP so that uracil cannot be incorporated into DNA. The protein is Deoxyuridine 5'-triphosphate nucleotidohydrolase of Albidiferax ferrireducens (strain ATCC BAA-621 / DSM 15236 / T118) (Rhodoferax ferrireducens).